We begin with the raw amino-acid sequence, 270 residues long: MRHHEWVPLDEIVRKAKMPEKDVLYRLKRLNKFGFVVRSTYGYAVSMGGYDALAINAFVKKGILKAIGNKLGVGKEGDVYTVLLSDGREAVLKFHKHGRTCFTRGKRYRGYLADKHHISWLYVSRLTAEREFEILNELFPIVKVPEPIEWNRHAIIMGKVVGEELKRLDLSEFMSKEEIKDLFWKIIEEVKKAYEIGYIHGDLSEFNILLDENGDFVIIDWPQAVPKYHPDAEFYLKRDIWNVIRYFKKYKIDKEDEKIDVDKIFEYITK.

The Protein kinase domain occupies 65 to 270; the sequence is KAIGNKLGVG…VDKIFEYITK (206 aa). ATP is bound by residues 72 to 77, lysine 93, and 158 to 164; these read GVGKEG and GKVVGEE. Mg(2+) is bound at residue glutamate 76. Aspartate 202 functions as the Proton acceptor in the catalytic mechanism. ATP-binding positions include 206–207 and aspartate 220; that span reads FN. Residues asparagine 207 and aspartate 220 each contribute to the Mg(2+) site.

Belongs to the protein kinase superfamily. RIO-type Ser/Thr kinase family. Monomer. The cofactor is Mg(2+).

It carries out the reaction L-seryl-[protein] + ATP = O-phospho-L-seryl-[protein] + ADP + H(+). The catalysed reaction is L-threonyl-[protein] + ATP = O-phospho-L-threonyl-[protein] + ADP + H(+). This chain is RIO-type serine/threonine-protein kinase Rio2 (rio2), found in Methanocaldococcus jannaschii (strain ATCC 43067 / DSM 2661 / JAL-1 / JCM 10045 / NBRC 100440) (Methanococcus jannaschii).